Here is a 339-residue protein sequence, read N- to C-terminus: Biotin synthase (339 aa).

The Radical SAM core domain maps to 47–276; the sequence is FYGKKVKLNM…SKEIRISGGR (230 aa). The [4Fe-4S] cluster site is built by C65, C69, and C72. The [2Fe-2S] cluster site is built by C109, C141, C201, and R271.

This sequence belongs to the radical SAM superfamily. Biotin synthase family. In terms of assembly, homodimer. It depends on [4Fe-4S] cluster as a cofactor. The cofactor is [2Fe-2S] cluster.

It carries out the reaction (4R,5S)-dethiobiotin + (sulfur carrier)-SH + 2 reduced [2Fe-2S]-[ferredoxin] + 2 S-adenosyl-L-methionine = (sulfur carrier)-H + biotin + 2 5'-deoxyadenosine + 2 L-methionine + 2 oxidized [2Fe-2S]-[ferredoxin]. It functions in the pathway cofactor biosynthesis; biotin biosynthesis; biotin from 7,8-diaminononanoate: step 2/2. Functionally, catalyzes the conversion of dethiobiotin (DTB) to biotin by the insertion of a sulfur atom into dethiobiotin via a radical-based mechanism. The sequence is that of Biotin synthase from Bacillus velezensis (strain DSM 23117 / BGSC 10A6 / LMG 26770 / FZB42) (Bacillus amyloliquefaciens subsp. plantarum).